The sequence spans 425 residues: Enolase (425 aa).

Q163 contributes to the (2R)-2-phosphoglycerate binding site. Residue E205 is the Proton donor of the active site. Mg(2+)-binding residues include D242, E285, and D312. (2R)-2-phosphoglycerate is bound by residues K337, R366, S367, and K388. Catalysis depends on K337, which acts as the Proton acceptor.

The protein belongs to the enolase family. It depends on Mg(2+) as a cofactor.

Its subcellular location is the cytoplasm. It is found in the secreted. The protein resides in the cell surface. The catalysed reaction is (2R)-2-phosphoglycerate = phosphoenolpyruvate + H2O. The protein operates within carbohydrate degradation; glycolysis; pyruvate from D-glyceraldehyde 3-phosphate: step 4/5. Functionally, catalyzes the reversible conversion of 2-phosphoglycerate (2-PG) into phosphoenolpyruvate (PEP). It is essential for the degradation of carbohydrates via glycolysis. The chain is Enolase from Paracoccus denitrificans (strain Pd 1222).